Reading from the N-terminus, the 81-residue chain is Large ribosomal subunit protein bL31B (81 aa).

Belongs to the bacterial ribosomal protein bL31 family. Type B subfamily. As to quaternary structure, part of the 50S ribosomal subunit.

This is Large ribosomal subunit protein bL31B from Limosilactobacillus reuteri (strain DSM 20016) (Lactobacillus reuteri).